Reading from the N-terminus, the 190-residue chain is Putative manganese efflux pump MntP (190 aa).

6 helical membrane-spanning segments follow: residues 5–25, 41–61, 64–84, 105–125, 127–147, and 169–189; these read ALLALAVALAMDALAVAVATG, WHFGLFQAAMPIAGWFMGQGI, FVDAWAHWIAFGLLAFIGLKM, TSLIMLSVATSIDALAVGVTL, MLGLSIWMPAAVIGLVCLGLT, and ILGGAVLLGIGFKILHESGVF.

Belongs to the MntP (TC 9.B.29) family.

It localises to the cell inner membrane. In terms of biological role, probably functions as a manganese efflux pump. This chain is Putative manganese efflux pump MntP, found in Oleidesulfovibrio alaskensis (strain ATCC BAA-1058 / DSM 17464 / G20) (Desulfovibrio alaskensis).